Here is a 117-residue protein sequence, read N- to C-terminus: Flagellar transcriptional regulator FlhD (117 aa).

The protein belongs to the FlhD family. In terms of assembly, homodimer; disulfide-linked. Forms a heterohexamer composed of two FlhC and four FlhD subunits. Each FlhC binds a FlhD dimer, forming a heterotrimer, and a hexamer assembles by dimerization of two heterotrimers.

It is found in the cytoplasm. Functions in complex with FlhC as a master transcriptional regulator that regulates transcription of several flagellar and non-flagellar operons by binding to their promoter region. Activates expression of class 2 flagellar genes, including fliA, which is a flagellum-specific sigma factor that turns on the class 3 genes. Also regulates genes whose products function in a variety of physiological pathways. The protein is Flagellar transcriptional regulator FlhD of Erwinia amylovora (strain CFBP1430).